The sequence spans 241 residues: Adenosylcobinamide-GDP ribazoletransferase (241 aa).

Transmembrane regions (helical) follow at residues 34–54 (LGLP…AWAF), 108–128 (VGGL…FGWI), 184–206 (LPFS…WTCL), and 220–240 (FLGA…SSLP).

The protein belongs to the CobS family. It depends on Mg(2+) as a cofactor.

The protein localises to the cell membrane. It carries out the reaction alpha-ribazole + adenosylcob(III)inamide-GDP = adenosylcob(III)alamin + GMP + H(+). The enzyme catalyses alpha-ribazole 5'-phosphate + adenosylcob(III)inamide-GDP = adenosylcob(III)alamin 5'-phosphate + GMP + H(+). It functions in the pathway cofactor biosynthesis; adenosylcobalamin biosynthesis; adenosylcobalamin from cob(II)yrinate a,c-diamide: step 7/7. In terms of biological role, joins adenosylcobinamide-GDP and alpha-ribazole to generate adenosylcobalamin (Ado-cobalamin). Also synthesizes adenosylcobalamin 5'-phosphate from adenosylcobinamide-GDP and alpha-ribazole 5'-phosphate. This is Adenosylcobinamide-GDP ribazoletransferase from Methanopyrus kandleri (strain AV19 / DSM 6324 / JCM 9639 / NBRC 100938).